Here is a 137-residue protein sequence, read N- to C-terminus: Prefoldin subunit alpha (137 aa).

It belongs to the prefoldin subunit alpha family. In terms of assembly, heterohexamer of two alpha and four beta subunits.

It is found in the cytoplasm. Functionally, molecular chaperone capable of stabilizing a range of proteins. Seems to fulfill an ATP-independent, HSP70-like function in archaeal de novo protein folding. This is Prefoldin subunit alpha (pfdA) from Archaeoglobus fulgidus (strain ATCC 49558 / DSM 4304 / JCM 9628 / NBRC 100126 / VC-16).